A 184-amino-acid polypeptide reads, in one-letter code: FMRFamide-like neuropeptides 3 (184 aa).

The first 23 residues, 1-23 (MISPNHLILLFCVNCAFLVASDA), serve as a signal peptide directing secretion. The propeptide occupies 24–25 (TP). A Phenylalanine amide modification is found at Phe-35. A propeptide spanning residues 39 to 73 (AIADEMTFEEDGYYPSNVMWKRSTVDSSEPVIRDQ) is cleaved from the precursor. A phenylalanine amide mark is found at Phe-82, Phe-95, Phe-111, and Phe-126. The tract at residues 90–110 (FGTMRFGKRNPENDTPFGTMR) is disordered. The propeptide occupies 130 to 142 (EDGNAPFGTMKFG). Residues 150 to 184 (LGTMRFGKRSADDSAPFGTMRFGKRNPLGTMRFGK) form a disordered region. A phenylalanine amide mark is found at Phe-155, Phe-171, and Phe-182.

The protein belongs to the FARP (FMRFamide related peptide) family. In terms of tissue distribution, each flp gene is expressed in a distinct set of neurons. Flp-3 is expressed in the IL1 and PQR neurons.

It is found in the secreted. Its function is as follows. FMRFamides and FMRFamide-like peptides are neuropeptides. SAEPFGTMRF-amide inhibits the activity of dissected pharyngeal myogenic muscle system. The chain is FMRFamide-like neuropeptides 3 from Caenorhabditis elegans.